We begin with the raw amino-acid sequence, 191 residues long: Biogenesis of lysosome-related organelles complex 1 subunit 5 (191 aa).

Residues 1-32 (MSGGGTETPTGCEAPSGGGGGGGRKRDSLGTT) are disordered. S2 is subject to N-acetylserine. Residues 160-191 (QADVDEEHRKAMEKLKEQYAEMEKDLAKFSTF) are a coiled coil.

It belongs to the BLOC1S5 family. Component of the biogenesis of lysosome-related organelles complex 1 (BLOC-1) composed of BLOC1S1, BLOC1S2, BLOC1S3, BLOC1S4, BLOC1S5, BLOC1S6, DTNBP1/BLOC1S7 and SNAPIN/BLOC1S8. Octamer composed of one copy each BLOC1S1, BLOC1S2, BLOC1S3, BLOC1S4, BLOC1S5, BLOC1S6, DTNBP1/BLOC1S7 and SNAPIN/BLOC1S8. The BLOC-1 complex associates with the AP-3 protein complex and membrane protein cargos. Interacts with BLOC1S4, BLOC1S6, DTNBP1/BLOC1S7 and PI4K2A.

Its function is as follows. Component of the BLOC-1 complex, a complex that is required for normal biogenesis of lysosome-related organelles (LRO), such as platelet dense granules and melanosomes. In concert with the AP-3 complex, the BLOC-1 complex is required to target membrane protein cargos into vesicles assembled at cell bodies for delivery into neurites and nerve terminals. The BLOC-1 complex, in association with SNARE proteins, is also proposed to be involved in neurite extension. Plays a role in intracellular vesicle trafficking. The polypeptide is Biogenesis of lysosome-related organelles complex 1 subunit 5 (BLOC1S5) (Sus scrofa (Pig)).